The following is a 101-amino-acid chain: NADH-quinone oxidoreductase subunit K (101 aa).

The next 3 membrane-spanning stretches (helical) occupy residues Leu-4–Leu-24, Ile-30–Phe-50, and Ile-61–Leu-81.

Belongs to the complex I subunit 4L family. In terms of assembly, NDH-1 is composed of 14 different subunits. Subunits NuoA, H, J, K, L, M, N constitute the membrane sector of the complex.

It localises to the cell inner membrane. The catalysed reaction is a quinone + NADH + 5 H(+)(in) = a quinol + NAD(+) + 4 H(+)(out). Its function is as follows. NDH-1 shuttles electrons from NADH, via FMN and iron-sulfur (Fe-S) centers, to quinones in the respiratory chain. The immediate electron acceptor for the enzyme in this species is believed to be ubiquinone. Couples the redox reaction to proton translocation (for every two electrons transferred, four hydrogen ions are translocated across the cytoplasmic membrane), and thus conserves the redox energy in a proton gradient. This Nitrosomonas eutropha (strain DSM 101675 / C91 / Nm57) protein is NADH-quinone oxidoreductase subunit K.